The following is a 918-amino-acid chain: Hexokinase-1 (918 aa).

Met1 is modified (N-acetylmethionine). The interval 1 to 10 is mitochondrial-binding peptide (MBP); sequence MIAAQLLAYY. 2 Hexokinase domains span residues 16-458 and 464-906; these read DDQV…MVTA and AEQH…LITA. Residues Arg30 and 84-89 each bind ATP; that span reads DLGGSS. Positions 73–207 are hexokinase small subdomain 1; it reads DGSEKGDFIA…DYDANIVAVV (135 aa). Residue 84–91 participates in D-glucose 6-phosphate binding; that stretch reads DLGGSSFR. D-glucose is bound by residues Ser155, 172-173, and 208-209; these read TK and ND. Positions 208 to 447 are hexokinase large subdomain 1; it reads NDTVGTMIDC…SDVRFLLSES (240 aa). 2 residues coordinate D-glucose 6-phosphate: Asp209 and Thr232. D-glucose contacts are provided by residues Asn235, Glu260, and 291-294; that span reads QRFE. Phosphoserine is present on Ser337. A D-glucose 6-phosphate-binding site is contributed by 413–415; that stretch reads DGS. Residues 425–426 and 532–537 contribute to the ATP site; these read RR and DLGGTN. The segment at 521 to 655 is hexokinase small subdomain 2; that stretch reads DGTEDGDFLA…EFDLDVVAVV (135 aa). 532–536 lines the D-glucose 6-phosphate pocket; it reads DLGGT. D-glucose is bound by residues 603–604, 620–621, and 656–657; these read SF, TK, and ND. The tract at residues 656-895 is hexokinase large subdomain 2; the sequence is NDTVGTMMTC…CNVSFLLSED (240 aa). D-glucose 6-phosphate-binding residues include Asp657 and Thr680. Residue Thr680 participates in ATP binding. Residues 682–683, Glu708, and Glu742 contribute to the D-glucose site; that span reads SN. ATP is bound by residues 747-748, 784-788, and 863-867; these read GI, TKFLS, and TLYKL. D-glucose 6-phosphate is bound by residues 861-863 and Ser897; that span reads DGT.

Belongs to the hexokinase family. As to quaternary structure, monomer. Interacts with RABL2/RABL2A; binds preferentially to GTP-bound RABL2. Interacts with VDAC1. The HK1-VDAC1 complex interacts with ATF2. Interacts (via N-terminal spermatogenic cell-specific region) with PFKM (via C-terminus). Interacts with SMAD5.

The protein resides in the mitochondrion outer membrane. Its subcellular location is the cytoplasm. It localises to the cytosol. It carries out the reaction a D-hexose + ATP = a D-hexose 6-phosphate + ADP + H(+). The enzyme catalyses D-fructose + ATP = D-fructose 6-phosphate + ADP + H(+). The catalysed reaction is D-glucose + ATP = D-glucose 6-phosphate + ADP + H(+). It catalyses the reaction D-mannose + ATP = D-mannose 6-phosphate + ADP + H(+). It carries out the reaction D-glucosamine + ATP = D-glucosamine 6-phosphate + ADP + H(+). It functions in the pathway carbohydrate metabolism; hexose metabolism. The protein operates within carbohydrate degradation; glycolysis; D-glyceraldehyde 3-phosphate and glycerone phosphate from D-glucose: step 1/4. Its activity is regulated as follows. Hexokinase is an allosteric enzyme inhibited by its product D-glucose 6-phosphate. Hexokinase activity is inhibited by N-acetyl-D-glucosamine. In terms of biological role, catalyzes the phosphorylation of various hexoses, such as D-glucose, D-glucosamine, D-fructose, D-mannose and 2-deoxy-D-glucose, to hexose 6-phosphate (D-glucose 6-phosphate, D-glucosamine 6-phosphate, D-fructose 6-phosphate, D-mannose 6-phosphate and 2-deoxy-D-glucose 6-phosphate, respectively). Does not phosphorylate N-acetyl-D-glucosamine. Mediates the initial step of glycolysis by catalyzing phosphorylation of D-glucose to D-glucose 6-phosphate. Involved in innate immunity and inflammation by acting as a pattern recognition receptor for bacterial peptidoglycan. When released in the cytosol, N-acetyl-D-glucosamine component of bacterial peptidoglycan inhibits the hexokinase activity of HK1 and causes its dissociation from mitochondrial outer membrane, thereby activating the NLRP3 inflammasome. This chain is Hexokinase-1, found in Bos taurus (Bovine).